The primary structure comprises 253 residues: Imidazole glycerol phosphate synthase subunit HisF (253 aa).

Active-site residues include Asp11 and Asp130.

Belongs to the HisA/HisF family. As to quaternary structure, heterodimer of HisH and HisF.

The protein localises to the cytoplasm. It catalyses the reaction 5-[(5-phospho-1-deoxy-D-ribulos-1-ylimino)methylamino]-1-(5-phospho-beta-D-ribosyl)imidazole-4-carboxamide + L-glutamine = D-erythro-1-(imidazol-4-yl)glycerol 3-phosphate + 5-amino-1-(5-phospho-beta-D-ribosyl)imidazole-4-carboxamide + L-glutamate + H(+). Its pathway is amino-acid biosynthesis; L-histidine biosynthesis; L-histidine from 5-phospho-alpha-D-ribose 1-diphosphate: step 5/9. Functionally, IGPS catalyzes the conversion of PRFAR and glutamine to IGP, AICAR and glutamate. The HisF subunit catalyzes the cyclization activity that produces IGP and AICAR from PRFAR using the ammonia provided by the HisH subunit. In Acetivibrio thermocellus (strain ATCC 27405 / DSM 1237 / JCM 9322 / NBRC 103400 / NCIMB 10682 / NRRL B-4536 / VPI 7372) (Clostridium thermocellum), this protein is Imidazole glycerol phosphate synthase subunit HisF.